The primary structure comprises 118 residues: Heavy metal-associated isoprenylated plant protein 47 (118 aa).

Residues 1-67 (MRIKLSVNSE…KACHVTLETL (67 aa)) form the HMA domain. Position 115 is a cysteine methyl ester (C115). A lipid anchor (S-farnesyl cysteine) is attached at C115. A propeptide spans 116-118 (LVM) (removed in mature form).

This sequence belongs to the HIPP family.

Its function is as follows. Heavy-metal-binding protein. This Arabidopsis thaliana (Mouse-ear cress) protein is Heavy metal-associated isoprenylated plant protein 47.